The following is a 372-amino-acid chain: NAD(P)H-quinone oxidoreductase subunit 1 (372 aa).

The next 8 membrane-spanning stretches (helical) occupy residues 29–49 (WIPL…LVVV), 97–117 (WLFT…YLIV), 130–150 (VGIF…LMSG), 176–196 (LAFS…IDIV), 204–224 (ILGW…IAAL), 254–274 (FGLF…VFAI), 308–328 (SLGI…AVLL), and 347–367 (FLLP…LAFP).

Belongs to the complex I subunit 1 family. In terms of assembly, NDH-1 is composed of at least 11 different subunits.

It is found in the cellular thylakoid membrane. It carries out the reaction a plastoquinone + NADH + (n+1) H(+)(in) = a plastoquinol + NAD(+) + n H(+)(out). The enzyme catalyses a plastoquinone + NADPH + (n+1) H(+)(in) = a plastoquinol + NADP(+) + n H(+)(out). Functionally, NDH-1 shuttles electrons from an unknown electron donor, via FMN and iron-sulfur (Fe-S) centers, to quinones in the respiratory and/or the photosynthetic chain. The immediate electron acceptor for the enzyme in this species is believed to be plastoquinone. Couples the redox reaction to proton translocation, and thus conserves the redox energy in a proton gradient. This is NAD(P)H-quinone oxidoreductase subunit 1 from Rippkaea orientalis (strain PCC 8801 / RF-1) (Cyanothece sp. (strain PCC 8801)).